A 119-amino-acid chain; its full sequence is Methylglyoxal synthase (119 aa).

Positions 1 to 119 constitute an MGS-like domain; it reads MKIALIAHDK…KTAELIIKQF (119 aa). Substrate-binding positions include His-8, Lys-12, 34–37, and 54–55; these read TGTT and SG. Asp-60 functions as the Proton donor/acceptor in the catalytic mechanism. His-87 lines the substrate pocket.

Belongs to the methylglyoxal synthase family.

It carries out the reaction dihydroxyacetone phosphate = methylglyoxal + phosphate. In terms of biological role, catalyzes the formation of methylglyoxal from dihydroxyacetone phosphate. The chain is Methylglyoxal synthase from Clostridium beijerinckii (strain ATCC 51743 / NCIMB 8052) (Clostridium acetobutylicum).